Here is a 305-residue protein sequence, read N- to C-terminus: Mycothiol acetyltransferase (305 aa).

2 consecutive N-acetyltransferase domains span residues 10 to 154 and 156 to 305; these read DRLD…VVLE and ISLR…YARA. 1D-myo-inositol 2-(L-cysteinylamino)-2-deoxy-alpha-D-glucopyranoside is bound at residue E38. Residue 82–84 coordinates acetyl-CoA; it reads LAV. Residues E183, K225, and E238 each contribute to the 1D-myo-inositol 2-(L-cysteinylamino)-2-deoxy-alpha-D-glucopyranoside site. Residues 242–244 and 249–255 each bind acetyl-CoA; these read VAI and QGRGLGR. Y276 is a binding site for 1D-myo-inositol 2-(L-cysteinylamino)-2-deoxy-alpha-D-glucopyranoside. 281 to 286 contributes to the acetyl-CoA binding site; that stretch reads NASALH.

The protein belongs to the acetyltransferase family. MshD subfamily. As to quaternary structure, monomer.

The enzyme catalyses 1D-myo-inositol 2-(L-cysteinylamino)-2-deoxy-alpha-D-glucopyranoside + acetyl-CoA = mycothiol + CoA + H(+). Catalyzes the transfer of acetyl from acetyl-CoA to desacetylmycothiol (Cys-GlcN-Ins) to form mycothiol. This Rhodococcus opacus (strain B4) protein is Mycothiol acetyltransferase.